Consider the following 266-residue polypeptide: 3-methyl-2-oxobutanoate hydroxymethyltransferase (266 aa).

The Mg(2+) site is built by aspartate 45 and aspartate 84. Residues 45–46 (DS), aspartate 84, and lysine 112 each bind 3-methyl-2-oxobutanoate. Residue glutamate 114 participates in Mg(2+) binding. Glutamate 181 (proton acceptor) is an active-site residue.

It belongs to the PanB family. Homodecamer; pentamer of dimers. Requires Mg(2+) as cofactor.

It localises to the cytoplasm. The catalysed reaction is 3-methyl-2-oxobutanoate + (6R)-5,10-methylene-5,6,7,8-tetrahydrofolate + H2O = 2-dehydropantoate + (6S)-5,6,7,8-tetrahydrofolate. Its pathway is cofactor biosynthesis; (R)-pantothenate biosynthesis; (R)-pantoate from 3-methyl-2-oxobutanoate: step 1/2. Functionally, catalyzes the reversible reaction in which hydroxymethyl group from 5,10-methylenetetrahydrofolate is transferred onto alpha-ketoisovalerate to form ketopantoate. The sequence is that of 3-methyl-2-oxobutanoate hydroxymethyltransferase from Pseudomonas fluorescens (strain SBW25).